Here is a 730-residue protein sequence, read N- to C-terminus: Neuroligin-like protein glit-1 (730 aa).

The signal sequence occupies residues 1–18; that stretch reads MFTGTIFNSLFTLPLVIS. The Extracellular portion of the chain corresponds to 19–663; the sequence is QFVPPPTRPV…EIMVFKWITG (645 aa). Asn-103, Asn-320, Asn-445, Asn-512, Asn-557, Asn-564, and Asn-604 each carry an N-linked (GlcNAc...) asparagine glycan. The chain crosses the membrane as a helical span at residues 664–684; that stretch reads VNVIIIALLIVLAGAFGYMVW. The Cytoplasmic portion of the chain corresponds to 685–730; sequence GNKEDEEAAYKAENHQLVEYRDTGHSVSDATISSRTRSPRSRITNL.

It belongs to the type-B carboxylesterase/lipase family. As to expression, expressed in the pharynx, intestine, and in several cells in the head including dopaminergic neurons.

It is found in the cell membrane. Probable neuronal cell surface protein thought to be involved in cell-cell-interactions. Confers protection against oxidative stress. Plays a role in protecting dopaminergic neurons against oxidative stress-induced neurodegeneration. This is Neuroligin-like protein glit-1 from Caenorhabditis elegans.